We begin with the raw amino-acid sequence, 216 residues long: Adenylate kinase (216 aa).

Glycine 10–threonine 15 provides a ligand contact to ATP. Positions serine 30–valine 59 are NMP. Residues threonine 31, arginine 36, lysine 57 to valine 59, glycine 85 to arginine 88, and glutamine 92 contribute to the AMP site. Positions glycine 126 to aspartate 163 are LID. Arginine 127 is an ATP binding site. Cysteine 130 and cysteine 133 together coordinate Zn(2+). ATP is bound at residue valine 136–tyrosine 137. Zn(2+) contacts are provided by cysteine 150 and cysteine 153. AMP-binding residues include arginine 160 and arginine 172. Alanine 200 serves as a coordination point for ATP.

Belongs to the adenylate kinase family. As to quaternary structure, monomer.

It is found in the cytoplasm. The catalysed reaction is AMP + ATP = 2 ADP. It functions in the pathway purine metabolism; AMP biosynthesis via salvage pathway; AMP from ADP: step 1/1. Functionally, catalyzes the reversible transfer of the terminal phosphate group between ATP and AMP. Plays an important role in cellular energy homeostasis and in adenine nucleotide metabolism. In Rhizobium etli (strain CIAT 652), this protein is Adenylate kinase.